The sequence spans 228 residues: PKHD-type hydroxylase Vapar_1809 (228 aa).

Residues 78–179 enclose the Fe2OG dioxygenase domain; it reads QISPPLFNRY…RTASYFWIQS (102 aa). Fe cation contacts are provided by H97, D99, and H160. R170 provides a ligand contact to 2-oxoglutarate.

Fe(2+) is required as a cofactor. The cofactor is L-ascorbate.

The chain is PKHD-type hydroxylase Vapar_1809 from Variovorax paradoxus (strain S110).